Here is a 290-residue protein sequence, read N- to C-terminus: Lipoyl synthase (290 aa).

Residues Cys-36, Cys-41, Cys-47, Cys-62, Cys-66, Cys-69, and Ser-275 each contribute to the [4Fe-4S] cluster site. The Radical SAM core domain maps to Phe-48–Ser-264.

This sequence belongs to the radical SAM superfamily. Lipoyl synthase family. It depends on [4Fe-4S] cluster as a cofactor.

The protein localises to the cytoplasm. It catalyses the reaction [[Fe-S] cluster scaffold protein carrying a second [4Fe-4S](2+) cluster] + N(6)-octanoyl-L-lysyl-[protein] + 2 oxidized [2Fe-2S]-[ferredoxin] + 2 S-adenosyl-L-methionine + 4 H(+) = [[Fe-S] cluster scaffold protein] + N(6)-[(R)-dihydrolipoyl]-L-lysyl-[protein] + 4 Fe(3+) + 2 hydrogen sulfide + 2 5'-deoxyadenosine + 2 L-methionine + 2 reduced [2Fe-2S]-[ferredoxin]. Its pathway is protein modification; protein lipoylation via endogenous pathway; protein N(6)-(lipoyl)lysine from octanoyl-[acyl-carrier-protein]: step 2/2. Its function is as follows. Catalyzes the radical-mediated insertion of two sulfur atoms into the C-6 and C-8 positions of the octanoyl moiety bound to the lipoyl domains of lipoate-dependent enzymes, thereby converting the octanoylated domains into lipoylated derivatives. The chain is Lipoyl synthase from Alkaliphilus metalliredigens (strain QYMF).